The following is a 406-amino-acid chain: MSFQMKYDIRLRFEVEGIVEKTDVIGAIFGQTENLFGDEFDLRELQDKGRLGRIIVEVKTKGGKSEGEIIIPSNLDRIETALIAAMVESVDKVGPYNSKFELIEIEDIRAEKLKKIIERAKGILSSWSKEKSLDIKEVINEISSAVKVGEITEYGPERLPAGPDVDKDPNLIIVEGRADVINLLRYGYKNVIAVEGATSRIPETLINLSKMKKTVIAFLDGDHGGDLILKELLSNNVKIDFVARAPIGREVEELTGKEIAKALSNMMPLTQYLKKVQEAEQAIAKNVIAKEEKPIQSETTQQVVQITLPQNILEEIKKLPGTLEGVLYDNNWNLIEKVQVRDIIPKLEAYEDNKVAYIIFDGVITQRLLDLASQKNIKMIIGARIGGINKRPQNVDILTFTDIISS.

One can recognise a Toprim domain in the interval 169–247; sequence PNLIIVEGRA…KIDFVARAPI (79 aa). Residues Glu175, Asp220, and Asp222 each contribute to the Mg(2+) site.

It belongs to the archaeal DnaG primase family. Forms a ternary complex with MCM helicase and DNA. Component of the archaeal exosome complex. Interacts with Csl4 but not with Rrp4. Mg(2+) is required as a cofactor.

The catalysed reaction is ssDNA + n NTP = ssDNA/pppN(pN)n-1 hybrid + (n-1) diphosphate.. Its function is as follows. RNA polymerase that catalyzes the synthesis of short RNA molecules used as primers for DNA polymerase during DNA replication. Can use NTPs but not dNTPs. Binds DNA. Also part of the exosome, which is a complex involved in RNA degradation. Acts as a poly(A)-binding protein that enhances the interaction between heteromeric, adenine-rich transcripts and the exosome. This Saccharolobus solfataricus (strain ATCC 35092 / DSM 1617 / JCM 11322 / P2) (Sulfolobus solfataricus) protein is DNA primase DnaG.